Reading from the N-terminus, the 448-residue chain is Tubulin beta chain (448 aa).

Residues Gln-11, Glu-69, Ser-138, Gly-142, Thr-143, Gly-144, Asn-204, and Asn-226 each coordinate GTP. Position 69 (Glu-69) interacts with Mg(2+). A disordered region spans residues 429 to 448 (SISDGEEQPYAEEAAYEAEE). Over residues 432–448 (DGEEQPYAEEAAYEAEE) the composition is skewed to acidic residues.

The protein belongs to the tubulin family. In terms of assembly, dimer of alpha and beta chains. A typical microtubule is a hollow water-filled tube with an outer diameter of 25 nm and an inner diameter of 15 nM. Alpha-beta heterodimers associate head-to-tail to form protofilaments running lengthwise along the microtubule wall with the beta-tubulin subunit facing the microtubule plus end conferring a structural polarity. Microtubules usually have 13 protofilaments but different protofilament numbers can be found in some organisms and specialized cells. Mg(2+) is required as a cofactor.

Its subcellular location is the cytoplasm. It localises to the cytoskeleton. Its function is as follows. Tubulin is the major constituent of microtubules, a cylinder consisting of laterally associated linear protofilaments composed of alpha- and beta-tubulin heterodimers. Microtubules grow by the addition of GTP-tubulin dimers to the microtubule end, where a stabilizing cap forms. Below the cap, tubulin dimers are in GDP-bound state, owing to GTPase activity of alpha-tubulin. The polypeptide is Tubulin beta chain (Aspergillus fumigatus (strain ATCC MYA-4609 / CBS 101355 / FGSC A1100 / Af293) (Neosartorya fumigata)).